Consider the following 147-residue polypeptide: Hemoglobin subunit beta-1 (147 aa).

Residues 3 to 147 (KWSKTELTII…VVSALGKQYH (145 aa)) enclose the Globin domain. Heme b contacts are provided by His64 and His93.

It belongs to the globin family. Hb1 is a heterotetramer of two alpha chains and two beta-1 chains. Red blood cells.

Involved in oxygen transport from gills to the various peripheral tissues. The chain is Hemoglobin subunit beta-1 (hbb1) from Cygnodraco mawsoni (Antarctic dragonfish).